Here is a 1446-residue protein sequence, read N- to C-terminus: DNA polymerase III PolC-type (1446 aa).

The Exonuclease domain occupies 425 to 581; that stretch reads YVIFDVETTG…ADAESTGYLL (157 aa).

Belongs to the DNA polymerase type-C family. PolC subfamily.

The protein resides in the cytoplasm. The enzyme catalyses DNA(n) + a 2'-deoxyribonucleoside 5'-triphosphate = DNA(n+1) + diphosphate. Required for replicative DNA synthesis. This DNA polymerase also exhibits 3' to 5' exonuclease activity. In Latilactobacillus sakei subsp. sakei (strain 23K) (Lactobacillus sakei subsp. sakei), this protein is DNA polymerase III PolC-type.